Consider the following 211-residue polypeptide: Wound-induced protein WIN2 (211 aa).

A signal peptide spans 1–25 (MVKLSCGPILLALVLCISLTSVANA). Residues 26–68 (QQCGRQRGGALCGNNLCCSQFGWCGSTPEYCSPSQGCQSQCTG) enclose the Chitin-binding type-1 domain. Disulfide bonds link C28–C43, C37–C49, C42–C56, and C62–C66. Positions 77 to 198 (GSAQNVRATY…VNYQFVNCGD (122 aa)) constitute a Barwin domain.

This chain is Wound-induced protein WIN2 (WIN2), found in Solanum tuberosum (Potato).